Reading from the N-terminus, the 609-residue chain is Replication protein A 70 kDa DNA-binding subunit (609 aa).

A disordered region spans residues 112 to 164; sequence IGNPHPYNDGQGPPQPAAPAPASAPPPSKPQNISAPPPPSMNRGASKLFGGGS. The segment covering 124-151 has biased composition (pro residues); sequence PPQPAAPAPASAPPPSKPQNISAPPPPS. Positions 189-273 form a DNA-binding region, OB; it reads WTVRARVTNK…VKNDYEMTFN (85 aa). A C4-type zinc finger spans residues 472–494; that stretch reads CPSQDCNKKVIDQQNGLFRCEKC.

This sequence belongs to the replication factor A protein 1 family. In terms of assembly, component of the heterotrimeric canonical replication protein A complex (RPA). Interacts with rpain-a.

The protein resides in the nucleus. The protein localises to the PML body. Its function is as follows. As part of the heterotrimeric replication protein A complex (RPA/RP-A), binds and stabilizes single-stranded DNA intermediates, that form during DNA replication or upon DNA stress. It prevents their reannealing and in parallel, recruits and activates different proteins and complexes involved in DNA metabolism. Thereby, it plays an essential role both in DNA replication and the cellular response to DNA damage. This is Replication protein A 70 kDa DNA-binding subunit (rpa1) from Xenopus tropicalis (Western clawed frog).